The primary structure comprises 206 residues: Guanylate kinase (206 aa).

One can recognise a Guanylate kinase-like domain in the interval 6–184; it reads GTLYIISAPS…ALDDLKAIFR (179 aa). Residue 13-20 coordinates ATP; the sequence is APSGAGKS.

Belongs to the guanylate kinase family.

The protein localises to the cytoplasm. The catalysed reaction is GMP + ATP = GDP + ADP. Essential for recycling GMP and indirectly, cGMP. The polypeptide is Guanylate kinase (Pseudomonas fluorescens (strain Pf0-1)).